An 859-amino-acid chain; its full sequence is DNA mismatch repair protein MutS (859 aa).

617 to 624 is a binding site for ATP; that stretch reads GPNMGGKS.

This sequence belongs to the DNA mismatch repair MutS family.

In terms of biological role, this protein is involved in the repair of mismatches in DNA. It is possible that it carries out the mismatch recognition step. This protein has a weak ATPase activity. The polypeptide is DNA mismatch repair protein MutS (Stutzerimonas stutzeri (strain A1501) (Pseudomonas stutzeri)).